The primary structure comprises 125 residues: Apolipoprotein C-IV (125 aa).

Residues 1–27 form the signal peptide; it reads MSLLRQRLQALPVLCLCVLVLACIGAC.

It belongs to the apolipoprotein C4 family.

It localises to the secreted. May participate in lipoprotein metabolism. The chain is Apolipoprotein C-IV (APOC4) from Plecturocebus moloch (Dusky titi monkey).